The chain runs to 323 residues: Putative HTH-type transcriptional regulatory protein Hlac_0273 (323 aa).

Positions 132–189 (LADEREERGWSLGRLATELGVSRRTVSKYEDGMNASIEVAIQLEDLFNEPFSSPVDVL) constitute an HTH cro/C1-type domain. Residues 143–162 (LGRLATELGVSRRTVSKYED) constitute a DNA-binding region (H-T-H motif). A disordered region spans residues 188-211 (VLDGAGEVRDADPTPSAPETDPDD).

This chain is Putative HTH-type transcriptional regulatory protein Hlac_0273, found in Halorubrum lacusprofundi (strain ATCC 49239 / DSM 5036 / JCM 8891 / ACAM 34).